A 232-amino-acid chain; its full sequence is Small ribosomal subunit protein uS3 (232 aa).

The KH type-2 domain occupies 39-107; the sequence is VRQYLTKELK…PAQINIAEVR (69 aa).

Belongs to the universal ribosomal protein uS3 family. Part of the 30S ribosomal subunit. Forms a tight complex with proteins S10 and S14.

Its function is as follows. Binds the lower part of the 30S subunit head. Binds mRNA in the 70S ribosome, positioning it for translation. The sequence is that of Small ribosomal subunit protein uS3 from Aliivibrio salmonicida (strain LFI1238) (Vibrio salmonicida (strain LFI1238)).